A 1334-amino-acid chain; its full sequence is Lysine-specific demethylase 3A-B (1334 aa).

Disordered stretches follow at residues 243–288 (DQND…KTSF), 352–382 (PGIQNAATPPPANSPPSFGAATPQGKGSQNL), and 514–533 (KPQEPPYTKSPNKTDGVTYP). The span at 267-283 (TEVKQTRNEEVPSKDVT) shows a compositional bias: basic and acidic residues. The C6-type zinc finger occupies 684–709 (CDACDTTIFNLHWVCPKCGFGVCVDC). The LXXLL motif motif lies at 897-901 (LRNLL). Residues 1089-1294 (RREGKLNLAA…HCFCLTQEFR (206 aa)) form the JmjC domain. The Fe cation site is built by histidine 1133, aspartate 1135, and histidine 1262.

The protein belongs to the JHDM2 histone demethylase family. Requires Fe(2+) as cofactor.

The protein resides in the cytoplasm. It is found in the nucleus. The enzyme catalyses N(6),N(6)-dimethyl-L-lysyl(9)-[histone H3] + 2 2-oxoglutarate + 2 O2 = L-lysyl(9)-[histone H3] + 2 formaldehyde + 2 succinate + 2 CO2. Functionally, histone demethylase that specifically demethylates 'Lys-9' of histone H3, thereby playing a central role in histone code. Preferentially demethylates mono- and dimethylated H3 'Lys-9' residue, with a preference for dimethylated residue, while it has weak or no activity on trimethylated H3 'Lys-9'. Demethylation of Lys residue generates formaldehyde and succinate. The chain is Lysine-specific demethylase 3A-B (kdm3a-b) from Xenopus laevis (African clawed frog).